The primary structure comprises 860 residues: DNA mismatch repair protein MutS (860 aa).

606-613 (GPNMSGKS) is a binding site for ATP.

The protein belongs to the DNA mismatch repair MutS family.

In terms of biological role, this protein is involved in the repair of mismatches in DNA. It is possible that it carries out the mismatch recognition step. This protein has a weak ATPase activity. This chain is DNA mismatch repair protein MutS, found in Geobacillus sp. (strain WCH70).